A 160-amino-acid polypeptide reads, in one-letter code: MSDEKTERPVKTANQRGAARLAAVQALYQMDVGGTGVLEIVAEYEAHRLGQEIDGATYLKADAGWFRSIVSGVVRDQVRLDPLIAAALQDDWALSRLDSTVRAILRAGVFELLDRKDVPVAVIVTEYVEIAQAFFDDDEPKLVNAVLDRIAKQVRSEAKK.

The protein belongs to the NusB family.

Functionally, involved in transcription antitermination. Required for transcription of ribosomal RNA (rRNA) genes. Binds specifically to the boxA antiterminator sequence of the ribosomal RNA (rrn) operons. This is Transcription antitermination protein NusB from Rhizobium etli (strain CIAT 652).